The chain runs to 164 residues: Crossover junction endodeoxyribonuclease RuvC (164 aa).

Catalysis depends on residues aspartate 7, glutamate 67, and aspartate 139. Positions 7, 67, and 139 each coordinate Mg(2+).

The protein belongs to the RuvC family. Homodimer which binds Holliday junction (HJ) DNA. The HJ becomes 2-fold symmetrical on binding to RuvC with unstacked arms; it has a different conformation from HJ DNA in complex with RuvA. In the full resolvosome a probable DNA-RuvA(4)-RuvB(12)-RuvC(2) complex forms which resolves the HJ. Mg(2+) is required as a cofactor.

It localises to the cytoplasm. It catalyses the reaction Endonucleolytic cleavage at a junction such as a reciprocal single-stranded crossover between two homologous DNA duplexes (Holliday junction).. The RuvA-RuvB-RuvC complex processes Holliday junction (HJ) DNA during genetic recombination and DNA repair. Endonuclease that resolves HJ intermediates. Cleaves cruciform DNA by making single-stranded nicks across the HJ at symmetrical positions within the homologous arms, yielding a 5'-phosphate and a 3'-hydroxyl group; requires a central core of homology in the junction. The consensus cleavage sequence is 5'-(A/T)TT(C/G)-3'. Cleavage occurs on the 3'-side of the TT dinucleotide at the point of strand exchange. HJ branch migration catalyzed by RuvA-RuvB allows RuvC to scan DNA until it finds its consensus sequence, where it cleaves and resolves the cruciform DNA. The sequence is that of Crossover junction endodeoxyribonuclease RuvC from Geobacter sp. (strain M21).